We begin with the raw amino-acid sequence, 73 residues long: Large ribosomal subunit protein bL31 (73 aa).

Belongs to the bacterial ribosomal protein bL31 family. Type A subfamily. Part of the 50S ribosomal subunit.

Its function is as follows. Binds the 23S rRNA. The protein is Large ribosomal subunit protein bL31 of Cereibacter sphaeroides (strain ATCC 17025 / ATH 2.4.3) (Rhodobacter sphaeroides).